The primary structure comprises 392 residues: p21-activated protein kinase-interacting protein 1 (392 aa).

5 WD repeats span residues 40–77 (AHTASLSAVAVNSRFVVTGSKDETIHIYDMKKKVDHGA), 80–118 (HHNGTITCLKFHGNRHLISGAEDGLICVWDARRWECLKS), 121–160 (AHKGHVTFLSIHPSGRLALSVGTDKTLRTWNLVEGRSAFI), 202–240 (TNERRVSSVTFLSESVLTVAGDEEVVRFFDCDSLTCLSE), and 243–284 (AHEN…KVSP). The tract at residues 309–392 (TKESPPAAAE…RKKKKIRMMQ (84 aa)) is disordered. The span at 325–351 (EQSRRNKEESGHAVQEEEKQPKPDTEK) shows a compositional bias: basic and acidic residues. Residues 355–368 (TGDSNKPTRGNSLV) show a composition bias toward polar residues. Over residues 381–392 (KKRKKKKIRMMQ) the composition is skewed to basic residues.

As to quaternary structure, interacts with PAK1.

Its subcellular location is the nucleus. It localises to the nucleolus. Functionally, negatively regulates the PAK1 kinase. PAK1 is a member of the PAK kinase family, which has been shown to play a positive role in the regulation of signaling pathways involving MAPK8 and RELA. PAK1 exists as an inactive homodimer, which is activated by binding of small GTPases such as CDC42 to an N-terminal regulatory domain. PAK1IP1 also binds to the N-terminus of PAK1, and inhibits the specific activation of PAK1 by CDC42. May be involved in ribosomal large subunit assembly. The protein is p21-activated protein kinase-interacting protein 1 (PAK1IP1) of Bos taurus (Bovine).